The following is a 468-amino-acid chain: WD repeat-containing protein 55 homolog (468 aa).

The segment at 1–107 (MRNFNSPKFG…VPKRVIDDYD (107 aa)) is disordered. 3 stretches are compositionally biased toward acidic residues: residues 15–26 (DDSDDDDFDSGT), 41–58 (PITE…EYNP), and 67–91 (SDDE…DGED). 6 WD repeats span residues 134–173 (KTED…CTIV), 178–217 (THTK…LKRF), 221–259 (AHEE…PVFK), 262–301 (EVED…MYVQ), 304–343 (PYEE…YHCD), and 388–427 (QHSL…EFDD).

Belongs to the WD repeat WDR55 family.

The polypeptide is WD repeat-containing protein 55 homolog (Aedes aegypti (Yellowfever mosquito)).